The primary structure comprises 381 residues: MDAAHWHQGLGLVKPMEEMLMGANPNPNGSSNQPPPPPSSAASAQRPIAPPAAGAAAGAGAAGAGAGTERRARPQKEKALNCPRCNSTNTKFCYYNNYSLQQPRYFCKTCRRYWTEGGSLRNVPVGGGSRKNKRSSSSVVPSAAASASTSAAVSGSVPVGLAAKNPKLMHEGAQDLNLAFPHHHGRALQPPEFTAFPSLESSSVCNPGGNLAAANGAGGRGSVGAFSAMELLRSTGCYVPLPQMAPLGMPAEYAAAGFHLGEFRMPPPPQQQQQQQAQTVLGFSLDTHGAGAGGGSGVFGACSAGLQESAAGRLLFPFEDLKPVVSAAAGDANSGGDHQYDHGKNQGGGGGVIGGHEAPGFWNSSMIGNGSSNGGGGGGSW.

Residues 19 to 81 (MLMGANPNPN…ARPQKEKALN (63 aa)) form a disordered region. 2 stretches are compositionally biased toward low complexity: residues 23 to 32 (ANPNPNGSSN) and 40 to 59 (SAAS…AAGA). The span at 68-79 (TERRARPQKEKA) shows a compositional bias: basic and acidic residues. The Dof-type zinc finger occupies 80 to 134 (LNCPRCNSTNTKFCYYNNYSLQQPRYFCKTCRRYWTEGGSLRNVPVGGGSRKNKR). Zn(2+) contacts are provided by cysteine 82, cysteine 85, cysteine 107, and cysteine 110. The disordered stretch occupies residues 329-349 (AGDANSGGDHQYDHGKNQGGG).

The protein resides in the nucleus. Transcription factor that may transactivate seed storage protein genes in developing seeds. The sequence is that of Dof zinc finger protein 2 from Oryza sativa subsp. japonica (Rice).